The sequence spans 333 residues: Terminal uridylyltransferase 4 (333 aa).

UTP is bound by residues Ser54 and 65–68 (SDVD). Asp66 and Asp68 together coordinate Mg(2+). Arg121 provides a ligand contact to RNA. UTP contacts are provided by residues 144–148 (GVRNS), Lys169, Lys173, and 188–189 (SY). One can recognise a PAP-associated domain in the interval 237 to 302 (LGTQVLDFLH…WCIEDPYELN (66 aa)).

It belongs to the DNA polymerase type-B-like family. Monomer. Mg(2+) serves as cofactor. Requires Mn(2+) as cofactor.

It carries out the reaction RNA(n) + UTP = RNA(n)-3'-uridine ribonucleotide + diphosphate. With respect to regulation, the 3' uridylated RNA substrate is involved in the selective incorporation of UTP; UTP binding is favored due to the constraint posed on the positioning of the NTP base by the continuous stacking interactions between Tyr-189 side chain, the bound NTP, and the terminal nucleoside base of the RNA substrate. Terminal uridylyltransferase which, specifically, catalyzes the addition of Us to the 3'-hydroxyl group of single-stranded RNAs with a 3'-terminal U. This chain is Terminal uridylyltransferase 4, found in Trypanosoma brucei brucei (strain 927/4 GUTat10.1).